We begin with the raw amino-acid sequence, 323 residues long: D-alanine--D-alanine ligase (323 aa).

The ATP-grasp domain maps to Lys-102–Gln-300. Val-130–Thr-185 serves as a coordination point for ATP. Mg(2+) is bound by residues Asp-254, Glu-267, and Asn-269.

This sequence belongs to the D-alanine--D-alanine ligase family. It depends on Mg(2+) as a cofactor. Requires Mn(2+) as cofactor.

It is found in the cytoplasm. It carries out the reaction 2 D-alanine + ATP = D-alanyl-D-alanine + ADP + phosphate + H(+). Its pathway is cell wall biogenesis; peptidoglycan biosynthesis. Functionally, cell wall formation. In Synechococcus sp. (strain JA-3-3Ab) (Cyanobacteria bacterium Yellowstone A-Prime), this protein is D-alanine--D-alanine ligase.